A 74-amino-acid chain; its full sequence is Large ribosomal subunit protein bL31 (74 aa).

The Zn(2+) site is built by Cys-16, Cys-18, Cys-38, and Cys-41.

This sequence belongs to the bacterial ribosomal protein bL31 family. Type A subfamily. In terms of assembly, part of the 50S ribosomal subunit. Zn(2+) serves as cofactor.

In terms of biological role, binds the 23S rRNA. The chain is Large ribosomal subunit protein bL31 (rpmE) from Streptomyces coelicolor (strain ATCC BAA-471 / A3(2) / M145).